A 268-amino-acid polypeptide reads, in one-letter code: tRNA pseudouridine synthase A (268 aa).

Aspartate 52 serves as the catalytic Nucleophile. Tyrosine 110 contributes to the substrate binding site.

This sequence belongs to the tRNA pseudouridine synthase TruA family. As to quaternary structure, homodimer.

It catalyses the reaction uridine(38/39/40) in tRNA = pseudouridine(38/39/40) in tRNA. Functionally, formation of pseudouridine at positions 38, 39 and 40 in the anticodon stem and loop of transfer RNAs. This chain is tRNA pseudouridine synthase A, found in Prochlorococcus marinus subsp. pastoris (strain CCMP1986 / NIES-2087 / MED4).